Reading from the N-terminus, the 131-residue chain is Sirohydrochlorin cobaltochelatase (131 aa).

Residue His-12 is the Proton acceptor of the active site. His-12 and His-78 together coordinate Co(2+). 2 residues coordinate Ni(2+): His-12 and His-78. A substrate-binding site is contributed by 73–78 (LASGVH).

It belongs to the CbiX family. CbiXS subfamily. In terms of assembly, homotetramer; dimer of dimers.

It catalyses the reaction Co-sirohydrochlorin + 2 H(+) = sirohydrochlorin + Co(2+). The enzyme catalyses Ni-sirohydrochlorin + 2 H(+) = sirohydrochlorin + Ni(2+). Its pathway is cofactor biosynthesis; adenosylcobalamin biosynthesis; cob(II)yrinate a,c-diamide from sirohydrochlorin (anaerobic route): step 1/10. Catalyzes the insertion of Co(2+) into sirohydrochlorin as part of the anaerobic pathway to cobalamin biosynthesis. Involved in the biosynthesis of the unique nickel-containing tetrapyrrole coenzyme F430, the prosthetic group of methyl-coenzyme M reductase (MCR), which plays a key role in methanogenesis and anaerobic methane oxidation. Catalyzes the insertion of Ni(2+) into sirohydrochlorin to yield Ni-sirohydrochlorin. This Methanococcoides burtonii (strain DSM 6242 / NBRC 107633 / OCM 468 / ACE-M) protein is Sirohydrochlorin cobaltochelatase.